Reading from the N-terminus, the 167-residue chain is Small ribosomal subunit protein uS9 (167 aa).

A disordered region spans residues 136 to 167 (KRAGFLTRDPRATERKKYGLKKARKAPQYSKR). Positions 143–152 (RDPRATERKK) are enriched in basic and acidic residues. Positions 153–167 (YGLKKARKAPQYSKR) are enriched in basic residues.

The protein belongs to the universal ribosomal protein uS9 family.

This chain is Small ribosomal subunit protein uS9, found in Nocardia farcinica (strain IFM 10152).